The following is a 328-amino-acid chain: Beta-ketoacyl-[acyl-carrier-protein] synthase III (328 aa).

Active-site residues include Cys114 and His253. Positions 254–258 (QANIR) are ACP-binding. Residue Asn283 is part of the active site.

Belongs to the thiolase-like superfamily. FabH family. Homodimer.

Its subcellular location is the cytoplasm. The catalysed reaction is malonyl-[ACP] + acetyl-CoA + H(+) = 3-oxobutanoyl-[ACP] + CO2 + CoA. The protein operates within lipid metabolism; fatty acid biosynthesis. Its function is as follows. Catalyzes the condensation reaction of fatty acid synthesis by the addition to an acyl acceptor of two carbons from malonyl-ACP. Catalyzes the first condensation reaction which initiates fatty acid synthesis and may therefore play a role in governing the total rate of fatty acid production. Possesses both acetoacetyl-ACP synthase and acetyl transacylase activities. Its substrate specificity determines the biosynthesis of branched-chain and/or straight-chain of fatty acids. The polypeptide is Beta-ketoacyl-[acyl-carrier-protein] synthase III (Clostridioides difficile (strain 630) (Peptoclostridium difficile)).